Here is a 398-residue protein sequence, read N- to C-terminus: Succinate--CoA ligase [ADP-forming] subunit beta (398 aa).

Positions 9–254 (KRLLHTYGAP…LTEEDPKEIE (246 aa)) constitute an ATP-grasp domain. ATP-binding positions include lysine 46, 53–55 (GRG), glutamate 109, alanine 112, and glutamate 117. Mg(2+)-binding residues include asparagine 209 and aspartate 223. Substrate-binding positions include asparagine 274 and 331–333 (GIM).

It belongs to the succinate/malate CoA ligase beta subunit family. Heterotetramer of two alpha and two beta subunits. The cofactor is Mg(2+).

The catalysed reaction is succinate + ATP + CoA = succinyl-CoA + ADP + phosphate. It carries out the reaction GTP + succinate + CoA = succinyl-CoA + GDP + phosphate. Its pathway is carbohydrate metabolism; tricarboxylic acid cycle; succinate from succinyl-CoA (ligase route): step 1/1. Its function is as follows. Succinyl-CoA synthetase functions in the citric acid cycle (TCA), coupling the hydrolysis of succinyl-CoA to the synthesis of either ATP or GTP and thus represents the only step of substrate-level phosphorylation in the TCA. The beta subunit provides nucleotide specificity of the enzyme and binds the substrate succinate, while the binding sites for coenzyme A and phosphate are found in the alpha subunit. The protein is Succinate--CoA ligase [ADP-forming] subunit beta of Brucella abortus (strain S19).